Here is a 376-residue protein sequence, read N- to C-terminus: Partitioning defective 6 homolog gamma (376 aa).

In terms of domain architecture, PB1 spans 18–98 (AVEVKSKFGA…PLLRVFIQKR (81 aa)). The interval 127–254 (RRRAHLDIGL…VTVKPANQRN (128 aa)) is interaction with PARD3 and CDC42. Residues 134-151 (IGLPRDFRPVSSIIDVDL) enclose the Pseudo-CRIB domain. The region spanning 158–251 (RVRLHRHGCE…NLIVTVKPAN (94 aa)) is the PDZ domain. A disordered region spans residues 356–376 (PRHSLALPPGGVEEHGPAVTL). Residues 367–376 (VEEHGPAVTL) show a composition bias toward basic and acidic residues.

Belongs to the PAR6 family. Interacts with PARD3. Interacts with GTP-bound forms of CDC42, RHOQ/TC10 and RAC1. Interacts with the N-terminal part of PRKCI and PRKCZ. Widely expressed, with a higher expression in fetal and adult kidney.

The protein resides in the cytoplasm. The protein localises to the cell membrane. It localises to the cell junction. It is found in the tight junction. Adapter protein involved in asymmetrical cell division and cell polarization processes. May play a role in the formation of epithelial tight junctions. The PARD6-PARD3 complex links GTP-bound Rho small GTPases to atypical protein kinase C proteins. The chain is Partitioning defective 6 homolog gamma (PARD6G) from Homo sapiens (Human).